Reading from the N-terminus, the 276-residue chain is Release factor glutamine methyltransferase (276 aa).

Residues 116–120, aspartate 139, tryptophan 167, and asparagine 182 each bind S-adenosyl-L-methionine; that span reads GTGTG. 182-185 contributes to the substrate binding site; the sequence is NPPY.

The protein belongs to the protein N5-glutamine methyltransferase family. PrmC subfamily.

The catalysed reaction is L-glutaminyl-[peptide chain release factor] + S-adenosyl-L-methionine = N(5)-methyl-L-glutaminyl-[peptide chain release factor] + S-adenosyl-L-homocysteine + H(+). In terms of biological role, methylates the class 1 translation termination release factors RF1/PrfA and RF2/PrfB on the glutamine residue of the universally conserved GGQ motif. This chain is Release factor glutamine methyltransferase, found in Pseudomonas aeruginosa (strain ATCC 15692 / DSM 22644 / CIP 104116 / JCM 14847 / LMG 12228 / 1C / PRS 101 / PAO1).